A 105-amino-acid chain; its full sequence is Large ribosomal subunit protein uL24 (105 aa).

The protein belongs to the universal ribosomal protein uL24 family. As to quaternary structure, part of the 50S ribosomal subunit.

Functionally, one of two assembly initiator proteins, it binds directly to the 5'-end of the 23S rRNA, where it nucleates assembly of the 50S subunit. Its function is as follows. One of the proteins that surrounds the polypeptide exit tunnel on the outside of the subunit. The protein is Large ribosomal subunit protein uL24 of Aliivibrio salmonicida (strain LFI1238) (Vibrio salmonicida (strain LFI1238)).